The chain runs to 290 residues: Ribosomal RNA small subunit methyltransferase A (290 aa).

The S-adenosyl-L-methionine site is built by Asn-27, Leu-29, Gly-54, Glu-75, Asp-100, and Asn-125.

It belongs to the class I-like SAM-binding methyltransferase superfamily. rRNA adenine N(6)-methyltransferase family. RsmA subfamily.

Its subcellular location is the cytoplasm. It catalyses the reaction adenosine(1518)/adenosine(1519) in 16S rRNA + 4 S-adenosyl-L-methionine = N(6)-dimethyladenosine(1518)/N(6)-dimethyladenosine(1519) in 16S rRNA + 4 S-adenosyl-L-homocysteine + 4 H(+). Its function is as follows. Specifically dimethylates two adjacent adenosines (A1518 and A1519) in the loop of a conserved hairpin near the 3'-end of 16S rRNA in the 30S particle. May play a critical role in biogenesis of 30S subunits. The polypeptide is Ribosomal RNA small subunit methyltransferase A (Streptococcus pneumoniae (strain Hungary19A-6)).